The chain runs to 185 residues: Ribosome-recycling factor (185 aa).

Belongs to the RRF family.

The protein resides in the cytoplasm. Functionally, responsible for the release of ribosomes from messenger RNA at the termination of protein biosynthesis. May increase the efficiency of translation by recycling ribosomes from one round of translation to another. This chain is Ribosome-recycling factor, found in Clostridium novyi (strain NT).